A 506-amino-acid polypeptide reads, in one-letter code: Apolipoprotein N-acyltransferase (506 aa).

7 consecutive transmembrane segments (helical) span residues alanine 10–glycine 30, leucine 33–tryptophan 53, valine 57–serine 77, isoleucine 105–alanine 125, tryptophan 139–isoleucine 159, leucine 176–serine 196, and valine 205–valine 225. The 236-residue stretch at isoleucine 238–arginine 473 folds into the CN hydrolase domain. Residue glutamate 279 is the Proton acceptor of the active site. Lysine 336 is a catalytic residue. Cysteine 385 acts as the Nucleophile in catalysis. A helical membrane pass occupies residues tyrosine 483–leucine 500.

It belongs to the CN hydrolase family. Apolipoprotein N-acyltransferase subfamily.

The protein localises to the cell inner membrane. The enzyme catalyses N-terminal S-1,2-diacyl-sn-glyceryl-L-cysteinyl-[lipoprotein] + a glycerophospholipid = N-acyl-S-1,2-diacyl-sn-glyceryl-L-cysteinyl-[lipoprotein] + a 2-acyl-sn-glycero-3-phospholipid + H(+). Its pathway is protein modification; lipoprotein biosynthesis (N-acyl transfer). Functionally, catalyzes the phospholipid dependent N-acylation of the N-terminal cysteine of apolipoprotein, the last step in lipoprotein maturation. This Thermosynechococcus vestitus (strain NIES-2133 / IAM M-273 / BP-1) protein is Apolipoprotein N-acyltransferase.